The chain runs to 102 residues: Small ribosomal subunit protein uS10 (102 aa).

This sequence belongs to the universal ribosomal protein uS10 family. As to quaternary structure, part of the 30S ribosomal subunit.

Involved in the binding of tRNA to the ribosomes. The protein is Small ribosomal subunit protein uS10 of Staphylococcus aureus (strain JH9).